A 41-amino-acid chain; its full sequence is Photosystem II reaction center protein L (41 aa).

Residues 20-40 (SLYLGLLLVFVVGILFSSYFF) traverse the membrane as a helical segment.

The protein belongs to the PsbL family. PSII is composed of 1 copy each of membrane proteins PsbA, PsbB, PsbC, PsbD, PsbE, PsbF, PsbH, PsbI, PsbJ, PsbK, PsbL, PsbM, PsbT, PsbX, PsbY, PsbZ, Psb30/Ycf12, peripheral proteins PsbO, CyanoQ (PsbQ), PsbU, PsbV and a large number of cofactors. It forms dimeric complexes.

It localises to the cellular thylakoid membrane. One of the components of the core complex of photosystem II (PSII). PSII is a light-driven water:plastoquinone oxidoreductase that uses light energy to abstract electrons from H(2)O, generating O(2) and a proton gradient subsequently used for ATP formation. It consists of a core antenna complex that captures photons, and an electron transfer chain that converts photonic excitation into a charge separation. This subunit is found at the monomer-monomer interface and is required for correct PSII assembly and/or dimerization. This is Photosystem II reaction center protein L from Trichodesmium erythraeum (strain IMS101).